Consider the following 353-residue polypeptide: MPQFEIPEQQWAQVVEKKGGPVVFKQIPVQKPGPDEVLINVKYSGVCHTDLHAMKGDWPLATKMPLVGGHEGAGVVVAKGELVTEVEVGDHAGIKWLNGSCLACSFCMQADEPLCPHALLSGYTVDGSFQQYAIAKAAHVAKIPKGCDLETTAPVLCAGITVYKGLKESGVRPGQCVAIVGAGGGLGSMAIQYANAMGLHAIAIDGGEEKGKNCRELGAQAYVDFTTTKDLVADVKAATPDGLGPHAVILLAVSEKPFHQAVDYVRSRGTIICIGLPAGAKFQAPVFDTVIRMITIKGSYVGNRQDTQEALDFFARGLIKVPIKTVGLSKLQEVYDLMEEGKIVGRYVVDTSK.

Residues Cys47, His70, Cys101, Cys104, Cys107, Cys115, and Cys157 each coordinate Zn(2+). Residues 181-187 (GAGGGLG), Asp205, Lys210, 274-276 (IGL), and Arg346 contribute to the NAD(+) site.

Belongs to the zinc-containing alcohol dehydrogenase family. As to quaternary structure, homotetramer. It depends on Zn(2+) as a cofactor.

The protein resides in the cytoplasm. It carries out the reaction a primary alcohol + NAD(+) = an aldehyde + NADH + H(+). The enzyme catalyses a secondary alcohol + NAD(+) = a ketone + NADH + H(+). In Neurospora crassa (strain ATCC 24698 / 74-OR23-1A / CBS 708.71 / DSM 1257 / FGSC 987), this protein is Alcohol dehydrogenase 1 (adh-1).